A 239-amino-acid polypeptide reads, in one-letter code: MTKTPTLSQADRLTLEAAIGHAFVEKERLDWALTHASARTHKAGNYERLEFLGDRVLGLCIAELLFRTFGTATEGELSVRLNQLVSAETCAAVADEMQLHLFIRTGADVKKLTGKRMLNVRADVVESLIAALYLDGGLEVARKFILRYWEGRAVRPDGARRDAKTELQEWAHAKFGVTPVYRVDDRSGPDHDPRFTVTVEVAGAAPETGIERSKRAAEQVAATRILEREGIWQPQSAQK.

The 126-residue stretch at 12–137 (RLTLEAAIGH…LIAALYLDGG (126 aa)) folds into the RNase III domain. Glu50 lines the Mg(2+) pocket. Asp54 is a catalytic residue. Positions 123 and 126 each coordinate Mg(2+). Glu126 is an active-site residue. Residues 162 to 231 (DAKTELQEWA…ATRILEREGI (70 aa)) form the DRBM domain.

The protein belongs to the ribonuclease III family. Homodimer. The cofactor is Mg(2+).

It localises to the cytoplasm. The catalysed reaction is Endonucleolytic cleavage to 5'-phosphomonoester.. Digests double-stranded RNA. Involved in the processing of primary rRNA transcript to yield the immediate precursors to the large and small rRNAs (23S and 16S). Processes some mRNAs, and tRNAs when they are encoded in the rRNA operon. Processes pre-crRNA and tracrRNA of type II CRISPR loci if present in the organism. The polypeptide is Ribonuclease 3 (Rhizobium rhizogenes (strain K84 / ATCC BAA-868) (Agrobacterium radiobacter)).